Consider the following 62-residue polypeptide: Insect toxin BsIT4 (62 aa).

The LCN-type CS-alpha/beta domain occupies 1-62 (DGYIKGNKGC…WLYAATNTCG (62 aa)). Disulfide bonds link cysteine 10-cysteine 61, cysteine 14-cysteine 35, cysteine 21-cysteine 42, and cysteine 25-cysteine 44.

This sequence belongs to the long (4 C-C) scorpion toxin superfamily. Sodium channel inhibitor family. Beta subfamily. Expressed by the venom gland.

It is found in the secreted. Its function is as follows. Depressant insect beta-toxins cause a transient contraction paralysis followed by a slow flaccid paralysis. They bind voltage-independently at site-4 of sodium channels (Nav) and shift the voltage of activation toward more negative potentials thereby affecting sodium channel activation and promoting spontaneous and repetitive firing. This toxin is active only on insects. The sequence is that of Insect toxin BsIT4 from Hottentotta tamulus sindicus (Scorpion).